Here is a 431-residue protein sequence, read N- to C-terminus: Histidinol dehydrogenase (431 aa).

Residues tyrosine 127, glutamine 185, and asparagine 208 each coordinate NAD(+). Substrate is bound by residues serine 234, glutamine 256, and histidine 259. Residues glutamine 256 and histidine 259 each contribute to the Zn(2+) site. Active-site proton acceptor residues include glutamate 323 and histidine 324. Residues histidine 324, aspartate 357, glutamate 411, and histidine 416 each contribute to the substrate site. Aspartate 357 serves as a coordination point for Zn(2+). Histidine 416 serves as a coordination point for Zn(2+).

This sequence belongs to the histidinol dehydrogenase family. Zn(2+) serves as cofactor.

The enzyme catalyses L-histidinol + 2 NAD(+) + H2O = L-histidine + 2 NADH + 3 H(+). Its pathway is amino-acid biosynthesis; L-histidine biosynthesis; L-histidine from 5-phospho-alpha-D-ribose 1-diphosphate: step 9/9. Catalyzes the sequential NAD-dependent oxidations of L-histidinol to L-histidinaldehyde and then to L-histidine. The chain is Histidinol dehydrogenase from Vibrio vulnificus (strain CMCP6).